The primary structure comprises 118 residues: Small integral membrane protein 17 (118 aa).

Residues 1–84 (MQSLRPEQTR…DDESEGSQGF (84 aa)) are disordered. The span at 13–42 (LEPERTKTLLPRESRAWEKPPHPACTKDWE) shows a compositional bias: basic and acidic residues. Residues 96-116 (IVLVVCVLFLFLVLTGMPMMF) traverse the membrane as a helical segment.

The protein localises to the membrane. The protein is Small integral membrane protein 17 (SMIM17) of Homo sapiens (Human).